Reading from the N-terminus, the 104-residue chain is uncharacterized protein (104 aa).

This is an uncharacterized protein from Treponema pallidum (strain Nichols).